The following is a 353-amino-acid chain: RNA 3'-terminal phosphate cyclase (353 aa).

ATP contacts are provided by residues Gln100 and 289–292; that span reads HMSD. Residue His315 is the Tele-AMP-histidine intermediate of the active site.

The protein belongs to the RNA 3'-terminal cyclase family. Type 1 subfamily.

It is found in the cytoplasm. It carries out the reaction a 3'-end 3'-phospho-ribonucleotide-RNA + ATP = a 3'-end 2',3'-cyclophospho-ribonucleotide-RNA + AMP + diphosphate. Its function is as follows. Catalyzes the conversion of 3'-phosphate to a 2',3'-cyclic phosphodiester at the end of RNA. The mechanism of action of the enzyme occurs in 3 steps: (A) adenylation of the enzyme by ATP; (B) transfer of adenylate to an RNA-N3'P to produce RNA-N3'PP5'A; (C) and attack of the adjacent 2'-hydroxyl on the 3'-phosphorus in the diester linkage to produce the cyclic end product. The biological role of this enzyme is unknown but it is likely to function in some aspects of cellular RNA processing. The polypeptide is RNA 3'-terminal phosphate cyclase (Ignicoccus hospitalis (strain KIN4/I / DSM 18386 / JCM 14125)).